We begin with the raw amino-acid sequence, 319 residues long: Probable arabinan endo-1,5-alpha-L-arabinosidase A (319 aa).

Positions 1–19 are cleaved as a signal peptide; sequence MYLQSSLALVLLRAAVVHG. Asp34 serves as the catalytic Proton acceptor. The N-linked (GlcNAc...) asparagine glycan is linked to Asn53. The Proton donor role is filled by Glu198.

This sequence belongs to the glycosyl hydrolase 43 family.

The protein resides in the secreted. The catalysed reaction is Endohydrolysis of (1-&gt;5)-alpha-arabinofuranosidic linkages in (1-&gt;5)-arabinans.. It participates in glycan metabolism; L-arabinan degradation. Its function is as follows. Endo-1,5-alpha-L-arabinanase involved in degradation of pectin. Its preferred substrate is linear 1,5-alpha-L-arabinan. The sequence is that of Probable arabinan endo-1,5-alpha-L-arabinosidase A (abnA) from Aspergillus flavus (strain ATCC 200026 / FGSC A1120 / IAM 13836 / NRRL 3357 / JCM 12722 / SRRC 167).